Consider the following 406-residue polypeptide: LIM/homeobox protein Lhx1 (406 aa).

LIM zinc-binding domains lie at 4–54 (CAGC…CKND) and 63–117 (CAGC…CKED). The segment covering 125–136 (AKENSLHSATTG) has biased composition (polar residues). Disordered regions lie at residues 125–187 (AKEN…RTTI) and 296–372 (FPQG…SAEV). The span at 137–148 (SDPSLSPDSQDP) shows a compositional bias: low complexity. A compositionally biased stretch (basic and acidic residues) spans 151 to 167 (DDAKDSESANVSDKETG). The segment at residues 180 to 239 (RRGPRTTIKAKQLETLKAAFAATPKPTRHIREQLAQETGLNMRVIQVWFQNRRSKERRMK) is a DNA-binding region (homeobox).

It is found in the nucleus. Functionally, transcriptional factor that defines subclasses of motoneurons that segregate into columns in the spinal cord and select distinct axon pathways. Acts in conjunction with ISL-2. This is LIM/homeobox protein Lhx1 (LHX1) from Gallus gallus (Chicken).